Consider the following 424-residue polypeptide: GTPase Obg (424 aa).

Residues 1–158 (MFYDQAKIYV…RNLLLELKLL (158 aa)) form the Obg domain. The OBG-type G domain maps to 159–329 (ADVGLVGFPN…LVYAAAKALP (171 aa)). GTP contacts are provided by residues 165-172 (GFPNVGKS), 190-194 (FTTLV), 212-215 (DIPG), 282-285 (NKMD), and 310-312 (SAA). Residues serine 172 and threonine 192 each contribute to the Mg(2+) site. Residues 347–424 (TQASAPHRFE…IAGIEFEWEE (78 aa)) form the OCT domain.

It belongs to the TRAFAC class OBG-HflX-like GTPase superfamily. OBG GTPase family. In terms of assembly, monomer. Mg(2+) serves as cofactor.

The protein resides in the cytoplasm. Its function is as follows. An essential GTPase which binds GTP, GDP and possibly (p)ppGpp with moderate affinity, with high nucleotide exchange rates and a fairly low GTP hydrolysis rate. Plays a role in control of the cell cycle, stress response, ribosome biogenesis and in those bacteria that undergo differentiation, in morphogenesis control. This Desulfitobacterium hafniense (strain Y51) protein is GTPase Obg.